Consider the following 342-residue polypeptide: Dual-specificity RNA methyltransferase RlmN (342 aa).

Glutamate 92 serves as the catalytic Proton acceptor. Residues 98 to 329 enclose the Radical SAM core domain; sequence DLPRSTLCVS…THVRRSRGGE (232 aa). The cysteines at positions 105 and 334 are disulfide-linked. [4Fe-4S] cluster is bound by residues cysteine 112, cysteine 116, and cysteine 119. S-adenosyl-L-methionine-binding positions include 161–162, serine 193, 215–217, and asparagine 291; these read GE and SLH. Cysteine 334 functions as the S-methylcysteine intermediate in the catalytic mechanism.

It belongs to the radical SAM superfamily. RlmN family. [4Fe-4S] cluster serves as cofactor.

The protein resides in the cytoplasm. The catalysed reaction is adenosine(2503) in 23S rRNA + 2 reduced [2Fe-2S]-[ferredoxin] + 2 S-adenosyl-L-methionine = 2-methyladenosine(2503) in 23S rRNA + 5'-deoxyadenosine + L-methionine + 2 oxidized [2Fe-2S]-[ferredoxin] + S-adenosyl-L-homocysteine. It catalyses the reaction adenosine(37) in tRNA + 2 reduced [2Fe-2S]-[ferredoxin] + 2 S-adenosyl-L-methionine = 2-methyladenosine(37) in tRNA + 5'-deoxyadenosine + L-methionine + 2 oxidized [2Fe-2S]-[ferredoxin] + S-adenosyl-L-homocysteine. Specifically methylates position 2 of adenine 2503 in 23S rRNA and position 2 of adenine 37 in tRNAs. m2A2503 modification seems to play a crucial role in the proofreading step occurring at the peptidyl transferase center and thus would serve to optimize ribosomal fidelity. The sequence is that of Dual-specificity RNA methyltransferase RlmN from Syntrophobacter fumaroxidans (strain DSM 10017 / MPOB).